The primary structure comprises 226 residues: Ribosomal RNA small subunit methyltransferase G (226 aa).

S-adenosyl-L-methionine contacts are provided by residues G86, L91, 137 to 138 (VE), and R150.

This sequence belongs to the methyltransferase superfamily. RNA methyltransferase RsmG family.

It is found in the cytoplasm. The enzyme catalyses guanosine(527) in 16S rRNA + S-adenosyl-L-methionine = N(7)-methylguanosine(527) in 16S rRNA + S-adenosyl-L-homocysteine. Its function is as follows. Specifically methylates the N7 position of guanine in position 527 of 16S rRNA. In Polaromonas sp. (strain JS666 / ATCC BAA-500), this protein is Ribosomal RNA small subunit methyltransferase G.